Reading from the N-terminus, the 314-residue chain is NADH-ubiquinone oxidoreductase chain 2 (314 aa).

Transmembrane regions (helical) follow at residues 13 to 35, 61 to 80, 85 to 107, 117 to 139, 144 to 166, 189 to 209, 224 to 244, 246 to 266, and 294 to 314; these read LGVMLIGTILSVSSEELVGVWLG, YFVVQSTGSILMLVGFVSLM, VSGLVMSTAXTVLKSGVFPLHSW, WLASGLMLTWQKVAPLVFLSMIL, LWVVIVSMAGIGAVGGLNQNSVR, VVFVGYFAVYSLSVGLFFYGC, AASGMGLLMLMGMPPFLGFLA, VLVFLMSGSPVIVACIMGSVI, and IWSLVICMNIMGGALILVSFI.

It belongs to the complex I subunit 2 family.

The protein resides in the mitochondrion inner membrane. The catalysed reaction is a ubiquinone + NADH + 5 H(+)(in) = a ubiquinol + NAD(+) + 4 H(+)(out). Core subunit of the mitochondrial membrane respiratory chain NADH dehydrogenase (Complex I) that is believed to belong to the minimal assembly required for catalysis. Complex I functions in the transfer of electrons from NADH to the respiratory chain. The immediate electron acceptor for the enzyme is believed to be ubiquinone. The sequence is that of NADH-ubiquinone oxidoreductase chain 2 (ND2) from Mytilus edulis (Blue mussel).